Consider the following 331-residue polypeptide: Peroxidase 60 (331 aa).

Positions 1 to 26 are cleaved as a signal peptide; the sequence is MAVKISTIEVLILSLALLSFGHGCYG. Cystine bridges form between Cys-37–Cys-113, Cys-70–Cys-75, Cys-119–Cys-321, and Cys-198–Cys-230. The active-site Proton acceptor is His-68. Positions 69, 74, 76, and 78 each coordinate Ca(2+). Pro-161 lines the substrate pocket. Position 191 (His-191) interacts with heme b. Thr-192 provides a ligand contact to Ca(2+). Residue Asn-245 is glycosylated (N-linked (GlcNAc...) asparagine). The Ca(2+) site is built by Ser-248 and Asp-253.

This sequence belongs to the peroxidase family. Classical plant (class III) peroxidase subfamily. Heme b serves as cofactor. Ca(2+) is required as a cofactor. Expressed in roots, slightly in leaves.

The protein resides in the secreted. It catalyses the reaction 2 a phenolic donor + H2O2 = 2 a phenolic radical donor + 2 H2O. Its function is as follows. Removal of H(2)O(2), oxidation of toxic reductants, biosynthesis and degradation of lignin, suberization, auxin catabolism, response to environmental stresses such as wounding, pathogen attack and oxidative stress. These functions might be dependent on each isozyme/isoform in each plant tissue. The protein is Peroxidase 60 (PER60) of Arabidopsis thaliana (Mouse-ear cress).